Here is a 488-residue protein sequence, read N- to C-terminus: PPE family protein PPE10 (488 aa).

Disordered regions lie at residues 207–232 and 443–488; these read NNNWGSGNTGSSNVGTGNTGSSNIGS and SDAG…LRTE.

Belongs to the mycobacterial PPE family.

It localises to the secreted. Its function is as follows. Plays a major role in the integrity and stability of the capsule. In Mycobacterium marinum (strain ATCC BAA-535 / M), this protein is PPE family protein PPE10.